A 206-amino-acid polypeptide reads, in one-letter code: Large ribosomal subunit protein uL22m (206 aa).

A mitochondrion-targeting transit peptide spans 1-40 (MAAAVLGQLGALWIHNLRSRGKLALGVLPQSYIHTSASLD).

This sequence belongs to the universal ribosomal protein uL22 family. As to quaternary structure, component of the mitochondrial large ribosomal subunit (mt-LSU). Mature mammalian 55S mitochondrial ribosomes consist of a small (28S) and a large (39S) subunit. The 28S small subunit contains a 12S ribosomal RNA (12S mt-rRNA) and 30 different proteins. The 39S large subunit contains a 16S rRNA (16S mt-rRNA), a copy of mitochondrial valine transfer RNA (mt-tRNA(Val)), which plays an integral structural role, and 52 different proteins.

Its subcellular location is the mitochondrion. The polypeptide is Large ribosomal subunit protein uL22m (MRPL22) (Homo sapiens (Human)).